The sequence spans 222 residues: Pyrrolidone-carboxylate peptidase (222 aa).

Residues E80, C146, and H170 contribute to the active site.

It belongs to the peptidase C15 family. Homotetramer.

It is found in the cytoplasm. It catalyses the reaction Release of an N-terminal pyroglutamyl group from a polypeptide, the second amino acid generally not being Pro.. In terms of biological role, removes 5-oxoproline from various penultimate amino acid residues except L-proline. The protein is Pyrrolidone-carboxylate peptidase of Mycobacterium marinum (strain ATCC BAA-535 / M).